We begin with the raw amino-acid sequence, 126 residues long: Holo-[acyl-carrier-protein] synthase (126 aa).

Mg(2+) contacts are provided by Asp9 and Glu58.

The protein belongs to the P-Pant transferase superfamily. AcpS family. Mg(2+) is required as a cofactor.

Its subcellular location is the cytoplasm. The enzyme catalyses apo-[ACP] + CoA = holo-[ACP] + adenosine 3',5'-bisphosphate + H(+). Functionally, transfers the 4'-phosphopantetheine moiety from coenzyme A to a Ser of acyl-carrier-protein. This Erwinia tasmaniensis (strain DSM 17950 / CFBP 7177 / CIP 109463 / NCPPB 4357 / Et1/99) protein is Holo-[acyl-carrier-protein] synthase.